A 437-amino-acid polypeptide reads, in one-letter code: Enolase 2 (437 aa).

2 residues coordinate substrate: His-160 and Glu-169. Glu-212 (proton donor) is an active-site residue. Mg(2+) is bound by residues Asp-247, Glu-296, and Asp-321. The substrate site is built by Glu-296 and Asp-321. Lys-346 functions as the Proton acceptor in the catalytic mechanism. Substrate-binding positions include 373–376 (SHRS) and Lys-397.

Belongs to the enolase family. Homodimer. Mg(2+) serves as cofactor.

Its subcellular location is the cytoplasm. The catalysed reaction is (2R)-2-phosphoglycerate = phosphoenolpyruvate + H2O. Its pathway is carbohydrate degradation; glycolysis; pyruvate from D-glyceraldehyde 3-phosphate: step 4/5. This Candida glabrata (strain ATCC 2001 / BCRC 20586 / JCM 3761 / NBRC 0622 / NRRL Y-65 / CBS 138) (Yeast) protein is Enolase 2 (ENO2).